The primary structure comprises 147 residues: uncharacterized protein (147 aa).

A helical membrane pass occupies residues 71–91; that stretch reads IDILAFVAGTVGVGSLVLLQF.

It localises to the virion. It is found in the host membrane. This is an uncharacterized protein from Acanthamoeba polyphaga mimivirus (APMV).